The sequence spans 423 residues: Replication factor C large subunit (423 aa).

63–70 (GPPGIGKT) contributes to the ATP binding site.

Belongs to the activator 1 small subunits family. RfcL subfamily. Heteromultimer composed of small subunits (RfcS) and large subunits (RfcL).

Its function is as follows. Part of the RFC clamp loader complex which loads the PCNA sliding clamp onto DNA. This Pyrobaculum islandicum (strain DSM 4184 / JCM 9189 / GEO3) protein is Replication factor C large subunit.